The sequence spans 418 residues: Bifunctional protein GlmU (418 aa).

Residues methionine 1–arginine 236 are pyrophosphorylase. UDP-N-acetyl-alpha-D-glucosamine-binding positions include leucine 7–glycine 10, lysine 21, glutamine 74, glycine 79–threonine 80, tyrosine 102–aspartate 104, glycine 141, glutamate 155, asparagine 170, and asparagine 234. Aspartate 104 contributes to the Mg(2+) binding site. Asparagine 234 is a Mg(2+) binding site. The interval valine 237 to alanine 257 is linker. The interval glycine 258–glutamine 418 is N-acetyltransferase. Positions 339 and 357 each coordinate UDP-N-acetyl-alpha-D-glucosamine. The active-site Proton acceptor is histidine 369. Tyrosine 372 lines the UDP-N-acetyl-alpha-D-glucosamine pocket. Alanine 386 serves as a coordination point for acetyl-CoA.

It in the N-terminal section; belongs to the N-acetylglucosamine-1-phosphate uridyltransferase family. The protein in the C-terminal section; belongs to the transferase hexapeptide repeat family. Homotrimer. The cofactor is Mg(2+).

It is found in the cytoplasm. The enzyme catalyses alpha-D-glucosamine 1-phosphate + acetyl-CoA = N-acetyl-alpha-D-glucosamine 1-phosphate + CoA + H(+). The catalysed reaction is N-acetyl-alpha-D-glucosamine 1-phosphate + UTP + H(+) = UDP-N-acetyl-alpha-D-glucosamine + diphosphate. The protein operates within nucleotide-sugar biosynthesis; UDP-N-acetyl-alpha-D-glucosamine biosynthesis; N-acetyl-alpha-D-glucosamine 1-phosphate from alpha-D-glucosamine 6-phosphate (route II): step 2/2. It participates in nucleotide-sugar biosynthesis; UDP-N-acetyl-alpha-D-glucosamine biosynthesis; UDP-N-acetyl-alpha-D-glucosamine from N-acetyl-alpha-D-glucosamine 1-phosphate: step 1/1. Its pathway is bacterial outer membrane biogenesis; LPS lipid A biosynthesis. Its function is as follows. Catalyzes the last two sequential reactions in the de novo biosynthetic pathway for UDP-N-acetylglucosamine (UDP-GlcNAc). The C-terminal domain catalyzes the transfer of acetyl group from acetyl coenzyme A to glucosamine-1-phosphate (GlcN-1-P) to produce N-acetylglucosamine-1-phosphate (GlcNAc-1-P), which is converted into UDP-GlcNAc by the transfer of uridine 5-monophosphate (from uridine 5-triphosphate), a reaction catalyzed by the N-terminal domain. This Cutibacterium acnes (strain DSM 16379 / KPA171202) (Propionibacterium acnes) protein is Bifunctional protein GlmU.